The sequence spans 449 residues: Putative gustatory receptor 77a (449 aa).

At 1-27 (MPLPLGDPLALAVSPQLGYIRITAMPR) the chain is on the cytoplasmic side. The helical transmembrane segment at 28–50 (WLQLPGMSALGILYSLTRVFGLM) threads the bilayer. Over 51–70 (ATANWSPRGIKRVRQSLYLR) the chain is Extracellular. A helical membrane pass occupies residues 71 to 93 (IHGCVMLIFVGCFSPFAFWCIFQ). At 94–102 (RMAFLRQNR) the chain is on the cytoplasmic side. The helical transmembrane segment at 103–125 (ILLMIGFNRYVLLLVCAFMTLWI) threads the bilayer. The Extracellular portion of the chain corresponds to 126–205 (HCFKQAEIIG…VRRNFMYACS (80 aa)). The chain crosses the membrane as a helical span at residues 206 to 228 (LVFVSVCQAILQLSLGMYTMAIL). At 229–298 (FLGHLVRHSN…LLKLHRSICS (70 aa)) the chain is on the cytoplasmic side. Residues 299 to 321 (LCAVQAVCFLGFVPLECTIHLFF) form a helical membrane-spanning segment. Topologically, residues 322 to 340 (TYFMKYSKFILRKYGRSFP) are extracellular. Residues 341–363 (LNYFAIAFLVGLFTNLLLVILPT) traverse the membrane as a helical segment. Topologically, residues 364–420 (YYSERRFNCTREIIKGGGLAFPSRITVKQLRHTMHFYGLYLKNVEHVFAVSACGLFK) are cytoplasmic. Residues 421–443 (LNNAILFCIVGAILEYLMILIQF) form a helical membrane-spanning segment. Residues 444 to 449 (DKVLNK) are Extracellular-facing.

The protein belongs to the insect chemoreceptor superfamily. Gustatory receptor (GR) family. Gr77a subfamily. In terms of tissue distribution, in larvae, is expressed in dorsal pharyngeal sense organ.

The protein localises to the cell membrane. Its function is as follows. Probable gustatory receptor which mediates acceptance or avoidance behavior, depending on its substrates. This Drosophila melanogaster (Fruit fly) protein is Putative gustatory receptor 77a (Gr77a).